We begin with the raw amino-acid sequence, 59 residues long: Antibacterial peptide enbocin (59 aa).

Residues 1 to 20 (MNFTRIIFFLFVVVFATASG) form the signal peptide. A propeptide is located at residue lysine 21. A Serine amide modification is found at serine 58.

Belongs to the cecropin family.

The protein resides in the secreted. In terms of biological role, has antibacterial activity against Gram-positive and Gram-negative bacteria. The chain is Antibacterial peptide enbocin from Bombyx mori (Silk moth).